Here is a 471-residue protein sequence, read N- to C-terminus: Bifunctional protein GlmU (471 aa).

The segment at Met1–Arg235 is pyrophosphorylase. Residues Leu7–Gly10, Lys21, Gln82, and Gly87–Thr88 contribute to the UDP-N-acetyl-alpha-D-glucosamine site. Asp112 lines the Mg(2+) pocket. UDP-N-acetyl-alpha-D-glucosamine-binding residues include Gly149, Glu164, Asn179, and Asn233. Residue Asn233 coordinates Mg(2+). The segment at Lys236–Ala256 is linker. Positions Gly257 to Pro471 are N-acetyltransferase. 2 residues coordinate UDP-N-acetyl-alpha-D-glucosamine: Arg338 and Lys356. The active-site Proton acceptor is His368. UDP-N-acetyl-alpha-D-glucosamine-binding residues include Tyr371 and Asn382. Acetyl-CoA is bound by residues Ala385, Asn391–Tyr392, Ser410, Ala428, and Arg445.

It in the N-terminal section; belongs to the N-acetylglucosamine-1-phosphate uridyltransferase family. In the C-terminal section; belongs to the transferase hexapeptide repeat family. In terms of assembly, homotrimer. Mg(2+) serves as cofactor.

The protein localises to the cytoplasm. The catalysed reaction is alpha-D-glucosamine 1-phosphate + acetyl-CoA = N-acetyl-alpha-D-glucosamine 1-phosphate + CoA + H(+). The enzyme catalyses N-acetyl-alpha-D-glucosamine 1-phosphate + UTP + H(+) = UDP-N-acetyl-alpha-D-glucosamine + diphosphate. It functions in the pathway nucleotide-sugar biosynthesis; UDP-N-acetyl-alpha-D-glucosamine biosynthesis; N-acetyl-alpha-D-glucosamine 1-phosphate from alpha-D-glucosamine 6-phosphate (route II): step 2/2. Its pathway is nucleotide-sugar biosynthesis; UDP-N-acetyl-alpha-D-glucosamine biosynthesis; UDP-N-acetyl-alpha-D-glucosamine from N-acetyl-alpha-D-glucosamine 1-phosphate: step 1/1. It participates in bacterial outer membrane biogenesis; LPS lipid A biosynthesis. Functionally, catalyzes the last two sequential reactions in the de novo biosynthetic pathway for UDP-N-acetylglucosamine (UDP-GlcNAc). The C-terminal domain catalyzes the transfer of acetyl group from acetyl coenzyme A to glucosamine-1-phosphate (GlcN-1-P) to produce N-acetylglucosamine-1-phosphate (GlcNAc-1-P), which is converted into UDP-GlcNAc by the transfer of uridine 5-monophosphate (from uridine 5-triphosphate), a reaction catalyzed by the N-terminal domain. This chain is Bifunctional protein GlmU, found in Trichodesmium erythraeum (strain IMS101).